The following is a 177-amino-acid chain: Large ribosomal subunit protein uL6 (177 aa).

It belongs to the universal ribosomal protein uL6 family. Part of the 50S ribosomal subunit.

Its function is as follows. This protein binds to the 23S rRNA, and is important in its secondary structure. It is located near the subunit interface in the base of the L7/L12 stalk, and near the tRNA binding site of the peptidyltransferase center. This Cereibacter sphaeroides (strain ATCC 17029 / ATH 2.4.9) (Rhodobacter sphaeroides) protein is Large ribosomal subunit protein uL6.